A 1481-amino-acid polypeptide reads, in one-letter code: Cystic fibrosis transmembrane conductance regulator (1481 aa).

The Cytoplasmic portion of the chain corresponds to 1–77 (MQRSPLEKAS…KLINALRRCF (77 aa)). The helical transmembrane segment at 78 to 98 (FWRFMFYGIILYLGEVTKAVQ) threads the bilayer. The region spanning 81-365 (FMFYGIILYL…WAVQTWYDSL (285 aa)) is the ABC transmembrane type-1 1 domain. The Extracellular segment spans residues 99-122 (PLLLGRIIASYDPDNEAERSIAIY). A helical membrane pass occupies residues 123-146 (LGIGLCLLFIVRTLLLHPAIFGLH). At 147–195 (HIGMQMRIAMFSLIYKKTLKLSSRVLDKISIGQLVSLLSNNLNKFDEGL) the chain is on the cytoplasmic side. A helical membrane pass occupies residues 196–216 (ALAHFVWIAPLQVTLLMGLLW). Over 217–222 (DLLQAS) the chain is Extracellular. A helical transmembrane segment spans residues 223–243 (AFCGLAFLIVLALFQAGLGRM). Topologically, residues 244–298 (MMKYRDQRAGKINERLVITSEMIENIQSVKAYCWEEAMEKMIENLRQTELKLTRK) are cytoplasmic. The chain crosses the membrane as a helical span at residues 299-319 (AAYVRYFNSSAFFFSGFFVVF). Residues 320 to 339 (LSVLPYALIKGIVLRRIFTT) lie on the Extracellular side of the membrane. The chain crosses the membrane as a helical span at residues 340–358 (ISFCIVLRMAVTRQFPWAV). Residues 359–858 (QTWYDSLGAI…YLRYITIHKS (500 aa)) are Cytoplasmic-facing. Residues tryptophan 401, serine 433, 457–464 (GSTGAGKT), and glutamine 492 each bind ATP. An ABC transporter 1 domain is found at 422 to 645 (NGDNSLFFSN…RPDFSSKLMG (224 aa)). The S-palmitoyl cysteine moiety is linked to residue cysteine 523. Serine 548 and serine 659 each carry phosphoserine. The interval 653-831 (SAERRNSILT…EEINEDDLKE (179 aa)) is disordered R region. The residue at position 669 (serine 669) is a Phosphoserine; by PKA. Serine 685 is modified (phosphoserine). A Glycyl lysine isopeptide (Lys-Gly) (interchain with G-Cter in ubiquitin) cross-link involves residue lysine 687. A phosphoserine mark is found at serine 699 and serine 711. Threonine 716 is modified (phosphothreonine). A phosphoserine mark is found at serine 736, serine 767, serine 790, serine 795, and serine 813. Residues 859-879 (LIFVLIWCLVIFLAEVAASLV) form a helical membrane-spanning segment. In terms of domain architecture, ABC transmembrane type-1 2 spans 859–1155 (LIFVLIWCLV…AVNSSIDVDS (297 aa)). At 880-918 (VLWLLKETPPQDSGNSTKGANNSYAVIITSTSSYYVFYI) the chain is on the extracellular side. Residues asparagine 894 and asparagine 900 are each glycosylated (N-linked (GlcNAc...) asparagine). A discontinuously helical membrane pass occupies residues 919–939 (YVGVADTLLALGLFRGLPLVH). Residues 940-990 (TLITVSKILHHKMLHSVLQAPMSTLNTLKAGGILNRFSKDMAILDDLLPLT) are Cytoplasmic-facing. The helical transmembrane segment at 991 to 1011 (IFDFIQLLLIVIGAVAVVSVL) threads the bilayer. The Extracellular segment spans residues 1012-1013 (QP). A helical transmembrane segment spans residues 1014-1034 (YIFLATVPVIAAFIILRAYFL). Topologically, residues 1035 to 1095 (HTSQQLKQLE…TANWFLYLST (61 aa)) are cytoplasmic. The chain crosses the membrane as a helical span at residues 1096–1116 (LRWFQMRIEMIFVIFFIAVTF). The Extracellular portion of the chain corresponds to 1117 to 1130 (ISILTTGEGEGTVG). The chain crosses the membrane as a helical span at residues 1131–1151 (IILTLAMNIMSTLQWAVNSSI). The Cytoplasmic segment spans residues 1152 to 1481 (DVDSLMRSVS…TEEEVQETRL (330 aa)). The ABC transporter 2 domain occupies 1211-1444 (MTVKDLTAKY…KSLFQQAISS (234 aa)). ATP contacts are provided by residues tyrosine 1220 and 1245–1252 (GRTGSGKS). Residues 1387-1481 (RTLKQAFADC…TEEEVQETRL (95 aa)) form an interaction with GORASP2 region. Cysteine 1396 is lipidated: S-palmitoyl cysteine. Serine 1445 and serine 1457 each carry phosphoserine. Residues 1449–1481 (KLFPHRNSSKHKSRSKIAALQEETEEEVQETRL) form a disordered region. Positions 1451–1463 (FPHRNSSKHKSRS) are enriched in basic residues. Over residues 1470–1481 (EETEEEVQETRL) the composition is skewed to acidic residues. Residues 1479–1481 (TRL) carry the PDZ-binding motif.

Belongs to the ABC transporter superfamily. ABCC family. CFTR transporter (TC 3.A.1.202) subfamily. Monomer; does not require oligomerization for channel activity. May form oligomers in the membrane. Interacts with SLC26A3, SLC26A6 and NHERF1. Interacts with SHANK2. Interacts with MYO6. Interacts (via C-terminus) with GOPC (via PDZ domain); this promotes CFTR internalization and thereby decreases channel activity. Interacts with SLC4A7 through NHERF1. Found in a complex with MYO5B and RAB11A. Interacts with ANO1. Interacts with SLC26A8. Interacts with AHCYL1; the interaction increases CFTR activity. Interacts with CSE1L. The core-glycosylated form interacts with GORASP2 (via PDZ GRASP-type 1 domain) in respone to ER stress. Interacts with MARCHF2; the interaction leads to CFTR ubiqtuitination and degradation. Interacts with ADGRG2. In terms of processing, N-glycosylated. Phosphorylated; cAMP treatment promotes phosphorylation and activates the channel. Dephosphorylation decreases the ATPase activity (in vitro). Phosphorylation at PKA sites activates the channel. Phosphorylation at PKC sites enhances the response to phosphorylation by PKA. Phosphorylated by AMPK; this inhibits channel activity. Post-translationally, ubiquitinated, leading to its degradation in the lysosome. Deubiquitination by USP10 in early endosomes enhances its endocytic recycling to the cell membrane. Ubiquitinated by RNF185 during ER stress. Ubiquitinated by MARCHF2.

It is found in the apical cell membrane. The protein resides in the early endosome membrane. It localises to the cell membrane. Its subcellular location is the recycling endosome membrane. The protein localises to the endoplasmic reticulum membrane. It is found in the nucleus. It catalyses the reaction ATP + H2O + closed Cl(-) channel = ADP + phosphate + open Cl(-) channel.. The enzyme catalyses chloride(in) = chloride(out). It carries out the reaction hydrogencarbonate(in) = hydrogencarbonate(out). The catalysed reaction is ATP + H2O = ADP + phosphate + H(+). Epithelial ion channel that plays an important role in the regulation of epithelial ion and water transport and fluid homeostasis. Mediates the transport of chloride ions across the cell membrane. Possesses an intrinsic ATPase activity and utilizes ATP to gate its channel; the passive flow of anions through the channel is gated by cycles of ATP binding and hydrolysis by the ATP-binding domains. The ion channel is also permeable to HCO(3)(-); selectivity depends on the extracellular chloride concentration. Exerts its function also by modulating the activity of other ion channels and transporters. Contributes to the regulation of the pH and the ion content of the epithelial fluid layer. Modulates the activity of the epithelial sodium channel (ENaC) complex, in part by regulating the cell surface expression of the ENaC complex. May regulate bicarbonate secretion and salvage in epithelial cells by regulating the transporter SLC4A7. Can inhibit the chloride channel activity of ANO1. Plays a role in the chloride and bicarbonate homeostasis during sperm epididymal maturation and capacitation. This is Cystic fibrosis transmembrane conductance regulator from Equus caballus (Horse).